The following is a 579-amino-acid chain: Protein PLASTID MOVEMENT IMPAIRED 15 (579 aa).

Coiled-coil stretches lie at residues 90–161, 188–216, 383–419, and 481–501; these read EVLK…NEEH, KVLDLLVERNKRIKNMLEEAERSKDIEIE, QKTKLDIDKKESELNSKLDELEKVKHTEALVLEKLES, and LMKTETLMRESEMTKAEEERE.

This sequence belongs to the WEB family.

Its function is as follows. Required for the chloroplast avoidance response under high intensity blue light. This avoidance response consists in the relocation of chloroplasts on the anticlinal side of exposed cells. The sequence is that of Protein PLASTID MOVEMENT IMPAIRED 15 (PMI15) from Arabidopsis thaliana (Mouse-ear cress).